The sequence spans 404 residues: Spore development regulator RYP2 (404 aa).

Disordered regions lie at residues methionine 1 to valine 46, leucine 200 to glutamine 231, and serine 382 to glycine 404. The region spanning leucine 17 to arginine 194 is the Velvet domain. Over residues asparagine 29–valine 46 the composition is skewed to basic and acidic residues. Over residues serine 382–serine 397 the composition is skewed to polar residues.

The protein belongs to the velvet family. VosA subfamily. Forms a heterodimeric complex with RYP3; the formation of the RYP2-RYP3 complex is light-dependent.

The protein resides in the nucleus. Component of the RYP2-RYP3 heterodimeric complex that plays a dual role in activating genes associated with spore maturation and repressing certain development-associated genes. The complex binds DNA through the DNA-binding domain of vosA that recognizes an 11-nucleotide consensus sequence 5'-CTGGCCGCGGC-3' consisting of two motifs in the promoters of key developmental regulatory genes. Required for viable spore production and regulation of sporulation in response to temperature and for the switch to yeast-form in the presence of host cells. The sequence is that of Spore development regulator RYP2 from Ajellomyces capsulatus (Darling's disease fungus).